A 483-amino-acid polypeptide reads, in one-letter code: UDP-N-acetylmuramoyl-L-alanyl-D-glutamate--2,6-diaminopimelate ligase (483 aa).

UDP-N-acetyl-alpha-D-muramoyl-L-alanyl-D-glutamate is bound at residue S30. 109–115 (GTNGKTT) is a binding site for ATP. UDP-N-acetyl-alpha-D-muramoyl-L-alanyl-D-glutamate-binding positions include 151-152 (TT), S178, and R186. K218 bears the N6-carboxylysine mark. Meso-2,6-diaminopimelate-binding positions include R380, 403-406 (DNPR), G453, and E457. The short motif at 403 to 406 (DNPR) is the Meso-diaminopimelate recognition motif element.

It belongs to the MurCDEF family. MurE subfamily. The cofactor is Mg(2+). Post-translationally, carboxylation is probably crucial for Mg(2+) binding and, consequently, for the gamma-phosphate positioning of ATP.

The protein localises to the cytoplasm. The enzyme catalyses UDP-N-acetyl-alpha-D-muramoyl-L-alanyl-D-glutamate + meso-2,6-diaminopimelate + ATP = UDP-N-acetyl-alpha-D-muramoyl-L-alanyl-gamma-D-glutamyl-meso-2,6-diaminopimelate + ADP + phosphate + H(+). It participates in cell wall biogenesis; peptidoglycan biosynthesis. In terms of biological role, catalyzes the addition of meso-diaminopimelic acid to the nucleotide precursor UDP-N-acetylmuramoyl-L-alanyl-D-glutamate (UMAG) in the biosynthesis of bacterial cell-wall peptidoglycan. This is UDP-N-acetylmuramoyl-L-alanyl-D-glutamate--2,6-diaminopimelate ligase from Chlamydia muridarum (strain MoPn / Nigg).